A 237-amino-acid chain; its full sequence is tRNA (guanine-N(7)-)-methyltransferase (237 aa).

S-adenosyl-L-methionine-binding residues include E65, E90, D117, and D140. D140 is an active-site residue. Substrate contacts are provided by residues K144, D176, and 212–215 (TKFE). Residues 197–217 (TCGPRQFSPRGERPETKFERR) are disordered. Residues 206–217 (RGERPETKFERR) are compositionally biased toward basic and acidic residues.

The protein belongs to the class I-like SAM-binding methyltransferase superfamily. TrmB family.

The enzyme catalyses guanosine(46) in tRNA + S-adenosyl-L-methionine = N(7)-methylguanosine(46) in tRNA + S-adenosyl-L-homocysteine. It functions in the pathway tRNA modification; N(7)-methylguanine-tRNA biosynthesis. In terms of biological role, catalyzes the formation of N(7)-methylguanine at position 46 (m7G46) in tRNA. This is tRNA (guanine-N(7)-)-methyltransferase from Alkalilimnicola ehrlichii (strain ATCC BAA-1101 / DSM 17681 / MLHE-1).